We begin with the raw amino-acid sequence, 271 residues long: Inactive phospholipid phosphatase 7 (271 aa).

A disordered region spans residues 1–66; that stretch reads MPASQSRARA…RERRQSQQLP (66 aa). Over 1-112 the chain is Cytoplasmic; it reads MPASQSRARA…AASWASARSM (112 aa). A phosphoserine mark is found at S43 and S62. Positions 70–91 are interaction with MTOR; the sequence is CMQLNPSFKGIAFNSLLAIDIC. The chain crosses the membrane as a helical span at residues 113–133; that stretch reads VKLIGITGHGIPWIGGTILCL. The Extracellular portion of the chain corresponds to 134 to 141; the sequence is VKSSTLAG. The chain crosses the membrane as a helical span at residues 142–162; it reads QEVLMNLLLALLLDIMTVAGV. Topologically, residues 163–202 are cytoplasmic; it reads QKLIKRRGPYETSPSLLDYLTMDIYAFPAGHASRAAMVSK. Residues 203–223 traverse the membrane as a helical segment; the sequence is FFLSHLVLAVPLRVLLVLWAL. The Extracellular portion of the chain corresponds to 224–239; the sequence is CVGLSRVMIGRHHVTD. The helical transmembrane segment at 240–260 threads the bilayer; sequence VLSGFVIGYLQFRLVELVWMP. Residues 261–271 are Cytoplasmic-facing; the sequence is SSTCQMLISAW.

Belongs to the PA-phosphatase related phosphoesterase family. As to quaternary structure, homo and heterooligomer. Interacts with MTOR; controls MTOR-dependent IGF2 expression during myoblast differentiation.

The protein resides in the nucleus envelope. It is found in the endoplasmic reticulum membrane. The protein localises to the membrane. Plays a role as negative regulator of myoblast differentiation, in part through effects on MTOR signaling. Has no detectable enzymatic activity. This Homo sapiens (Human) protein is Inactive phospholipid phosphatase 7.